Here is a 479-residue protein sequence, read N- to C-terminus: Ribosomal RNA small subunit methyltransferase F (479 aa).

S-adenosyl-L-methionine contacts are provided by residues 125–131, E149, D176, and D194; that span reads AAAPGSK. The active-site Nucleophile is C247.

The protein belongs to the class I-like SAM-binding methyltransferase superfamily. RsmB/NOP family.

Its subcellular location is the cytoplasm. It carries out the reaction cytidine(1407) in 16S rRNA + S-adenosyl-L-methionine = 5-methylcytidine(1407) in 16S rRNA + S-adenosyl-L-homocysteine + H(+). Functionally, specifically methylates the cytosine at position 1407 (m5C1407) of 16S rRNA. The polypeptide is Ribosomal RNA small subunit methyltransferase F (Citrobacter koseri (strain ATCC BAA-895 / CDC 4225-83 / SGSC4696)).